The primary structure comprises 333 residues: Adenosine deaminase (333 aa).

Zn(2+) is bound by residues His12 and His14. Substrate contacts are provided by His14, Asp16, and Gly170. A Zn(2+)-binding site is contributed by His197. The active-site Proton donor is Glu200. Asp278 provides a ligand contact to Zn(2+). Asp279 is a substrate binding site.

It belongs to the metallo-dependent hydrolases superfamily. Adenosine and AMP deaminases family. Adenosine deaminase subfamily. Requires Zn(2+) as cofactor.

The enzyme catalyses adenosine + H2O + H(+) = inosine + NH4(+). It catalyses the reaction 2'-deoxyadenosine + H2O + H(+) = 2'-deoxyinosine + NH4(+). Its function is as follows. Catalyzes the hydrolytic deamination of adenosine and 2-deoxyadenosine. In Aliivibrio fischeri (strain ATCC 700601 / ES114) (Vibrio fischeri), this protein is Adenosine deaminase.